The chain runs to 263 residues: 2-dehydro-3-deoxyphosphooctonate aldolase (263 aa).

This sequence belongs to the KdsA family.

It localises to the cytoplasm. It catalyses the reaction D-arabinose 5-phosphate + phosphoenolpyruvate + H2O = 3-deoxy-alpha-D-manno-2-octulosonate-8-phosphate + phosphate. Its pathway is carbohydrate biosynthesis; 3-deoxy-D-manno-octulosonate biosynthesis; 3-deoxy-D-manno-octulosonate from D-ribulose 5-phosphate: step 2/3. The protein operates within bacterial outer membrane biogenesis; lipopolysaccharide biosynthesis. The polypeptide is 2-dehydro-3-deoxyphosphooctonate aldolase (Wolinella succinogenes (strain ATCC 29543 / DSM 1740 / CCUG 13145 / JCM 31913 / LMG 7466 / NCTC 11488 / FDC 602W) (Vibrio succinogenes)).